Consider the following 704-residue polypeptide: Protein cueball (704 aa).

An N-terminal signal peptide occupies residues 1-26 (MKSPCRAAAGWLVLLLSSCCLGYVIA). Residues 27-594 (TEWAAAVTTD…TYCKESFNRT (568 aa)) are Extracellular-facing. LDL-receptor class B repeat units lie at residues 69 to 119 (GKLY…DHLE), 120 to 166 (RRLY…EATT), 199 to 242 (RHLY…DHYR), and 243 to 288 (NRLY…KNDY). N-linked (GlcNAc...) asparagine glycans are attached at residues Asn-152 and Asn-219. 3 consecutive EGF-like domains span residues 363–397 (TQQQGQLTVCLNNGTVNHHTNTCLCQPAFGGKLCE), 432–478 (DRNR…ARCE), and 514–551 (EEYSCNNYCLNGGHCTLGNETTVPECECGEEFAGQRCE). 8 disulfide bridges follow: Cys-372/Cys-385, Cys-387/Cys-396, Cys-436/Cys-446, Cys-440/Cys-465, Cys-467/Cys-477, Cys-518/Cys-528, Cys-522/Cys-539, and Cys-541/Cys-550. Residue Asn-375 is glycosylated (N-linked (GlcNAc...) asparagine). N-linked (GlcNAc...) asparagine glycosylation occurs at Asn-450. Residue Asn-532 is glycosylated (N-linked (GlcNAc...) asparagine). The N-linked (GlcNAc...) asparagine glycan is linked to Asn-592. A helical membrane pass occupies residues 595–615 (VVYTSLCFTVSFALLLAVVLV). The Cytoplasmic segment spans residues 616 to 704 (VSRMMKPPRP…NCGDGTAERK (89 aa)).

It belongs to the cueball family.

It localises to the cell membrane. Has a role in spermatogenesis and oogenesis. The chain is Protein cueball from Anopheles gambiae (African malaria mosquito).